The following is a 630-amino-acid chain: Chaperone protein HtpG (630 aa).

The interval 1–327 (MSVETYKFDA…SEDLSLNISR (327 aa)) is a; substrate-binding. A b region spans residues 328–551 (ETLQHSPLID…EGSMDIRTER (224 aa)). Over residues 483 to 499 (TKTAKSSDTNNDGKDDT) the composition is skewed to basic and acidic residues. The tract at residues 483–504 (TKTAKSSDTNNDGKDDTSSSDD) is disordered. The c stretch occupies residues 552 to 630 (FLIEQKQLSS…INFFIEKSVN (79 aa)).

Belongs to the heat shock protein 90 family. Homodimer.

Its subcellular location is the cytoplasm. Functionally, molecular chaperone. Has ATPase activity. This Orientia tsutsugamushi (strain Boryong) (Rickettsia tsutsugamushi) protein is Chaperone protein HtpG.